Consider the following 298-residue polypeptide: Acetyl-coenzyme A carboxylase carboxyl transferase subunit beta (298 aa).

The interval Met-1–Pro-21 is disordered. The C4-type zinc-finger motif lies at Arg-20–Cys-67. The region spanning Pro-41–Pro-298 is the CoA carboxyltransferase N-terminal domain. The Zn(2+) site is built by Cys-45, Cys-48, Cys-64, and Cys-67.

Belongs to the AccD/PCCB family. Acetyl-CoA carboxylase is a heterohexamer composed of biotin carboxyl carrier protein (AccB), biotin carboxylase (AccC) and two subunits each of ACCase subunit alpha (AccA) and ACCase subunit beta (AccD). It depends on Zn(2+) as a cofactor.

The protein localises to the cytoplasm. The enzyme catalyses N(6)-carboxybiotinyl-L-lysyl-[protein] + acetyl-CoA = N(6)-biotinyl-L-lysyl-[protein] + malonyl-CoA. The protein operates within lipid metabolism; malonyl-CoA biosynthesis; malonyl-CoA from acetyl-CoA: step 1/1. In terms of biological role, component of the acetyl coenzyme A carboxylase (ACC) complex. Biotin carboxylase (BC) catalyzes the carboxylation of biotin on its carrier protein (BCCP) and then the CO(2) group is transferred by the transcarboxylase to acetyl-CoA to form malonyl-CoA. This Acinetobacter baumannii (strain SDF) protein is Acetyl-coenzyme A carboxylase carboxyl transferase subunit beta.